A 444-amino-acid chain; its full sequence is Tryptophan 5-hydroxylase 1 (444 aa).

Residues 19–94 (TLIFSLKNEV…TVLSVDSPDQ (76 aa)) form the ACT domain. Ser-58 is modified (phosphoserine; by PKA). Residues Tyr-235, Arg-257, and Thr-265 each coordinate L-tryptophan. 3 residues coordinate Fe cation: His-272, His-277, and Glu-317. L-tryptophan-binding residues include Ser-336 and Ile-366.

It belongs to the biopterin-dependent aromatic amino acid hydroxylase family. As to quaternary structure, homotetramer. Interacts with DNAJC12. It depends on Fe(2+) as a cofactor. Ubiquitinated, leading to its degradation by the proteasome. Ubiquitinated is triggered by phosphorylation. In terms of processing, phosphorylated; triggering degradation by the proteasome.

The enzyme catalyses (6R)-L-erythro-5,6,7,8-tetrahydrobiopterin + L-tryptophan + O2 = 5-hydroxy-L-tryptophan + (4aS,6R)-4a-hydroxy-L-erythro-5,6,7,8-tetrahydrobiopterin. It functions in the pathway aromatic compound metabolism; serotonin biosynthesis; serotonin from L-tryptophan: step 1/2. Functionally, oxidizes L-tryptophan to 5-hydroxy-l-tryptophan in the rate-determining step of serotonin biosynthesis. This chain is Tryptophan 5-hydroxylase 1 (Tph1), found in Rattus norvegicus (Rat).